The sequence spans 386 residues: Patatin-B1 (386 aa).

The N-terminal stretch at 1-23 is a signal peptide; that stretch reads MATTKSFLILFFMILATTSSTCA. Residues 32–229 form the PNPLA domain; the sequence is LSIDGGGIKG…TVGDPALLSL (198 aa). The GXGXXG signature appears at 36-41; that stretch reads GGGIKG. Residues 75-79 carry the GXSXG motif; that stretch reads GTSTG. Catalysis depends on Ser77, which acts as the Nucleophile. A glycan (N-linked (GlcNAc...) asparagine) is linked at Asn115. Residue Asp215 is the Proton acceptor of the active site. The DGA/G motif lies at 215-217; that stretch reads DGG.

The protein belongs to the patatin family.

It is found in the vacuole. In terms of biological role, probable lipolytic acyl hydrolase (LAH), an activity which is thought to be involved in the response of tubers to pathogens. This chain is Patatin-B1 (PATB1), found in Solanum tuberosum (Potato).